Reading from the N-terminus, the 467-residue chain is Fumarate hydratase class II (467 aa).

Residues 99–101 (SGT), 130–133 (HPND), 140–142 (SSN), and Thr-188 each bind substrate. His-189 acts as the Proton donor/acceptor in catalysis. The active site involves Ser-319. Residues Ser-320 and 325-327 (KVN) each bind substrate.

This sequence belongs to the class-II fumarase/aspartase family. Fumarase subfamily. In terms of assembly, homotetramer.

The protein resides in the cytoplasm. The catalysed reaction is (S)-malate = fumarate + H2O. Its pathway is carbohydrate metabolism; tricarboxylic acid cycle; (S)-malate from fumarate: step 1/1. Functionally, involved in the TCA cycle. Catalyzes the stereospecific interconversion of fumarate to L-malate. The chain is Fumarate hydratase class II from Thermosynechococcus vestitus (strain NIES-2133 / IAM M-273 / BP-1).